A 119-amino-acid chain; its full sequence is Enhancer of yellow 2 transcription factor (119 aa).

The segment at 93–119 is disordered; sequence LTENETEGTDNHDDDEDDEDENGTEDN. The segment covering 96 to 119 has biased composition (acidic residues); sequence NETEGTDNHDDDEDDEDENGTEDN.

It belongs to the ENY2 family. As to quaternary structure, component of the nuclear pore complex (NPC)-associated AMEX complex (anchoring and mRNA export complex), composed of at least e(y)2 and xmas-2. Component of the SAGA transcription coactivator-HAT complexes, at least composed of Ada2b, e(y)2, Pcaf/Gcn5, Taf10 and Nipped-A/Trrap. Within the SAGA complex, e(y)2, Sgf11, and not/nonstop form an additional subcomplex of SAGA called the DUB module (deubiquitination module). Component of the THO complex, composed of at least e(y)2, HPR1, THO2, THOC5, THOC6 and THOC7. Interacts with e(y)1. Interacts with su(Hw) (via zinc fingers). Interacts with xmas-2; required for localization to the nuclear periphery. Interacts with the nuclear pore complex (NPC).

It is found in the nucleus. It localises to the nucleoplasm. The protein localises to the cytoplasm. Involved in mRNA export coupled transcription activation by association with both the AMEX and the SAGA complexes. The SAGA complex is a multiprotein complex that activates transcription by remodeling chromatin and mediating histone acetylation and deubiquitination. Within the SAGA complex, participates in a subcomplex that specifically deubiquitinates histone H2B. The SAGA complex is recruited to specific gene promoters by activators, where it is required for transcription. Required for nuclear receptor-mediated transactivation. Involved in transcription elongation by recruiting the THO complex onto nascent mRNA. The AMEX complex functions in docking export-competent ribonucleoprotein particles (mRNPs) to the nuclear entrance of the nuclear pore complex (nuclear basket). AMEX participates in mRNA export and accurate chromatin positioning in the nucleus by tethering genes to the nuclear periphery. The sequence is that of Enhancer of yellow 2 transcription factor from Drosophila willistoni (Fruit fly).